We begin with the raw amino-acid sequence, 404 residues long: Deoxyguanosinetriphosphate triphosphohydrolase-like protein (404 aa).

The interval 1–33 (MSVGMAAPRAAFSCDPDRSRGRQFAEPPSSNRS) is disordered. In terms of domain architecture, HD spans 69–217 (RLTHSLEVAQ…AALADDIAYD (149 aa)).

Belongs to the dGTPase family. Type 2 subfamily.

The polypeptide is Deoxyguanosinetriphosphate triphosphohydrolase-like protein (Rhodopseudomonas palustris (strain HaA2)).